The sequence spans 164 residues: MKITELLSPENIRQGVSFSSKKRLFESIAHFVEEQILAEKGEQACFECLFEREKLGNSGLGNGIAMPKAKIPVTVSDKAIAVFMQLDNPIDYDAFDGKPVDLIFALLIPENQCETYIPVLASLIEKLTDKNVLKQLRSAKSADEIWQVFEITDQSETTFEEVKE.

Residues 5-152 (ELLSPENIRQ…DEIWQVFEIT (148 aa)) form the PTS EIIA type-2 domain.

Functionally, not known; lacks the phosphorylation site found in other PtsN proteins. The polypeptide is Nitrogen regulatory protein homolog (ptsN) (Haemophilus influenzae (strain ATCC 51907 / DSM 11121 / KW20 / Rd)).